The primary structure comprises 502 residues: Mitochondrial fusion and transport protein UGO1 (502 aa).

Methionine 1 is modified (N-acetylmethionine). The Cytoplasmic segment spans residues 1 to 293; sequence MNNNNVTEAT…VINSPDISKS (293 aa). The binds FZO1 stretch occupies residues 1–294; the sequence is MNNNNVTEAT…INSPDISKSF (294 aa). Residues 288 to 383 form a Solcar repeat; that stretch reads PDISKSFILA…NSFFNKLFDL (96 aa). The chain crosses the membrane as a helical; Signal-anchor for type II membrane protein span at residues 294–314; it reads FILALGAGVFTSIILLPVDLI. Residues 312-502 are binds MGM1; the sequence is DLIRTRLIVT…VDINMEQEKF (191 aa). The Mitochondrial intermembrane segment spans residues 315 to 502; sequence RTRLIVTSFK…VDINMEQEKF (188 aa).

In terms of assembly, interacts with FZO1 through its cytoplasmic domain and with MGM1 through its mitochondrial intermembrane space domain.

It is found in the mitochondrion outer membrane. Required for mitochondrial fusion as well as normal mitochondrial morphology by bridging the essential interaction between FZO1 and MGM1. May coordinate fusion of inner and outer membranes during mitochondrial fusion. The chain is Mitochondrial fusion and transport protein UGO1 from Saccharomyces cerevisiae (strain ATCC 204508 / S288c) (Baker's yeast).